A 75-amino-acid chain; its full sequence is Small ribosomal subunit protein bS18 (75 aa).

The protein belongs to the bacterial ribosomal protein bS18 family. Part of the 30S ribosomal subunit. Forms a tight heterodimer with protein bS6.

In terms of biological role, binds as a heterodimer with protein bS6 to the central domain of the 16S rRNA, where it helps stabilize the platform of the 30S subunit. The chain is Small ribosomal subunit protein bS18 from Thermosipho melanesiensis (strain DSM 12029 / CIP 104789 / BI429).